The following is a 331-amino-acid chain: tRNA N6-adenosine threonylcarbamoyltransferase (331 aa).

H108 and H112 together coordinate Fe cation. Substrate-binding positions include 129-133, D161, E178, and S258; that span reads LVSGG. D286 provides a ligand contact to Fe cation.

Belongs to the KAE1 / TsaD family. It depends on Fe(2+) as a cofactor.

Its subcellular location is the cytoplasm. It catalyses the reaction L-threonylcarbamoyladenylate + adenosine(37) in tRNA = N(6)-L-threonylcarbamoyladenosine(37) in tRNA + AMP + H(+). In terms of biological role, required for the formation of a threonylcarbamoyl group on adenosine at position 37 (t(6)A37) in tRNAs that read codons beginning with adenine. Is probably involved in the transfer of the threonylcarbamoyl moiety of threonylcarbamoyl-AMP (TC-AMP) to the N6 group of A37. In Caldivirga maquilingensis (strain ATCC 700844 / DSM 13496 / JCM 10307 / IC-167), this protein is tRNA N6-adenosine threonylcarbamoyltransferase.